Here is a 310-residue protein sequence, read N- to C-terminus: Protoheme IX farnesyltransferase (310 aa).

9 consecutive transmembrane segments (helical) span residues 26–46 (VMSLVVFTALVGLLVAPATVH), 47–67 (PMIALTGILFIALGAGASGAL), 95–115 (GEALGLGLALSGIAVVMLGLA), 118–138 (LFAAGLLAFTIFFYAVVYSMW), 147–167 (IVIGGAAGAFPPMIGWAVATG), 174–194 (LFMFALIFMWTPPHFWSLALF), 220–240 (VLAYALLLAPLAVAGAFTGIG), 243–263 (LYLVVALALNGWLLRGAVRIW), and 281–301 (FFRFSLYYLFLHFGAILAEAA).

It belongs to the UbiA prenyltransferase family. Protoheme IX farnesyltransferase subfamily. In terms of assembly, interacts with CtaA.

It localises to the cell inner membrane. It carries out the reaction heme b + (2E,6E)-farnesyl diphosphate + H2O = Fe(II)-heme o + diphosphate. It participates in porphyrin-containing compound metabolism; heme O biosynthesis; heme O from protoheme: step 1/1. Functionally, converts heme B (protoheme IX) to heme O by substitution of the vinyl group on carbon 2 of heme B porphyrin ring with a hydroxyethyl farnesyl side group. In Cereibacter sphaeroides (strain ATCC 17025 / ATH 2.4.3) (Rhodobacter sphaeroides), this protein is Protoheme IX farnesyltransferase.